We begin with the raw amino-acid sequence, 268 residues long: Small ribosomal subunit protein eS1 (268 aa).

The tract at residues 1-21 (MAVGKNKGLSKGGKKGGKKKV) is disordered.

The protein belongs to the eukaryotic ribosomal protein eS1 family. Component of the small ribosomal subunit. Mature ribosomes consist of a small (40S) and a large (60S) subunit. The 40S subunit contains about 33 different proteins and 1 molecule of RNA (18S). The 60S subunit contains about 49 different proteins and 3 molecules of RNA (28S, 5.8S and 5S).

The protein resides in the cytoplasm. Its function is as follows. Essential for oogenesis; required for late follicle cell development. This is Small ribosomal subunit protein eS1 from Drosophila sechellia (Fruit fly).